The primary structure comprises 309 residues: HPr kinase/phosphorylase (309 aa).

Active-site residues include H139 and K160. 154-161 (GESGIGKS) provides a ligand contact to ATP. S161 serves as a coordination point for Mg(2+). The active-site Proton acceptor; for phosphorylation activity. Proton donor; for dephosphorylation activity is the D178. The interval 202-211 (IELRGIGIID) is important for the catalytic mechanism of both phosphorylation and dephosphorylation. Residue E203 participates in Mg(2+) binding. R244 is a catalytic residue. The important for the catalytic mechanism of dephosphorylation stretch occupies residues 265 to 270 (PIRPGR).

It belongs to the HPrK/P family. As to quaternary structure, homohexamer. Requires Mg(2+) as cofactor.

The catalysed reaction is [HPr protein]-L-serine + ATP = [HPr protein]-O-phospho-L-serine + ADP + H(+). It catalyses the reaction [HPr protein]-O-phospho-L-serine + phosphate + H(+) = [HPr protein]-L-serine + diphosphate. Functionally, catalyzes the ATP- as well as the pyrophosphate-dependent phosphorylation of a specific serine residue in HPr, a phosphocarrier protein of the phosphoenolpyruvate-dependent sugar phosphotransferase system (PTS). HprK/P also catalyzes the pyrophosphate-producing, inorganic phosphate-dependent dephosphorylation (phosphorolysis) of seryl-phosphorylated HPr (P-Ser-HPr). The two antagonistic activities of HprK/P are regulated by several intracellular metabolites, which change their concentration in response to the absence or presence of rapidly metabolisable carbon sources (glucose, fructose, etc.) in the growth medium. Therefore, by controlling the phosphorylation state of HPr, HPrK/P is a sensor enzyme that plays a major role in the regulation of carbon metabolism and sugar transport: it mediates carbon catabolite repression (CCR), and regulates PTS-catalyzed carbohydrate uptake and inducer exclusion. The protein is HPr kinase/phosphorylase of Lachnoclostridium phytofermentans (strain ATCC 700394 / DSM 18823 / ISDg) (Clostridium phytofermentans).